The primary structure comprises 115 residues: Putative membrane protein insertion efficiency factor (115 aa).

Belongs to the UPF0161 family.

The protein localises to the cell membrane. Could be involved in insertion of integral membrane proteins into the membrane. The chain is Putative membrane protein insertion efficiency factor from Mycobacterium avium (strain 104).